Here is a 376-residue protein sequence, read N- to C-terminus: Lipoyl synthase, mitochondrial (376 aa).

[4Fe-4S] cluster contacts are provided by Cys-103, Cys-108, Cys-114, Cys-134, Cys-138, Cys-141, and Ser-349. The region spanning 119–338 (EHGTQTATIM…EDRGNQLGFL (220 aa)) is the Radical SAM core domain.

Belongs to the radical SAM superfamily. Lipoyl synthase family. [4Fe-4S] cluster is required as a cofactor.

The protein resides in the mitochondrion. It catalyses the reaction [[Fe-S] cluster scaffold protein carrying a second [4Fe-4S](2+) cluster] + N(6)-octanoyl-L-lysyl-[protein] + 2 oxidized [2Fe-2S]-[ferredoxin] + 2 S-adenosyl-L-methionine + 4 H(+) = [[Fe-S] cluster scaffold protein] + N(6)-[(R)-dihydrolipoyl]-L-lysyl-[protein] + 4 Fe(3+) + 2 hydrogen sulfide + 2 5'-deoxyadenosine + 2 L-methionine + 2 reduced [2Fe-2S]-[ferredoxin]. It functions in the pathway protein modification; protein lipoylation via endogenous pathway; protein N(6)-(lipoyl)lysine from octanoyl-[acyl-carrier-protein]: step 2/2. In terms of biological role, catalyzes the radical-mediated insertion of two sulfur atoms into the C-6 and C-8 positions of the octanoyl moiety bound to the lipoyl domains of lipoate-dependent enzymes, thereby converting the octanoylated domains into lipoylated derivatives. The protein is Lipoyl synthase, mitochondrial of Drosophila ananassae (Fruit fly).